A 341-amino-acid chain; its full sequence is HTH-type transcriptional repressor PurR (341 aa).

The 55-residue stretch at 2–56 (ATIKDVAKRANVSTTTVSHVINKTRFVAEETRNAVWAAIKELHYSPSAVARSLKV) folds into the HTH lacI-type domain. The H-T-H motif DNA-binding region spans 4 to 23 (IKDVAKRANVSTTTVSHVIN). Residues 48-56 (SAVARSLKV) mediate DNA binding. Hypoxanthine-binding residues include Tyr73, Arg190, Thr192, Phe221, and Asp275.

In terms of assembly, homodimer.

It functions in the pathway purine metabolism; purine nucleotide biosynthesis [regulation]. In terms of biological role, is the main repressor of the genes involved in the de novo synthesis of purine nucleotides, regulating purB, purC, purEK, purF, purHD, purL, purMN and guaBA expression. PurR is allosterically activated to bind its cognate DNA by binding the purine corepressors, hypoxanthine or guanine, thereby effecting transcription repression. This Escherichia coli (strain UTI89 / UPEC) protein is HTH-type transcriptional repressor PurR.